Here is a 337-residue protein sequence, read N- to C-terminus: Anthranilate phosphoribosyltransferase (337 aa).

Residues Gly79, 82–83, Thr87, 89–92, 107–115, and Ser119 contribute to the 5-phospho-alpha-D-ribose 1-diphosphate site; these read GD, NVST, and KHGNRSVSS. Gly79 provides a ligand contact to anthranilate. Ser91 is a binding site for Mg(2+). Asn110 lines the anthranilate pocket. Anthranilate is bound at residue Arg165. Residues Asp223 and Glu224 each contribute to the Mg(2+) site.

Belongs to the anthranilate phosphoribosyltransferase family. In terms of assembly, homodimer. Requires Mg(2+) as cofactor.

It catalyses the reaction N-(5-phospho-beta-D-ribosyl)anthranilate + diphosphate = 5-phospho-alpha-D-ribose 1-diphosphate + anthranilate. The protein operates within amino-acid biosynthesis; L-tryptophan biosynthesis; L-tryptophan from chorismate: step 2/5. Its function is as follows. Catalyzes the transfer of the phosphoribosyl group of 5-phosphorylribose-1-pyrophosphate (PRPP) to anthranilate to yield N-(5'-phosphoribosyl)-anthranilate (PRA). This Aeromonas salmonicida (strain A449) protein is Anthranilate phosphoribosyltransferase.